The primary structure comprises 614 residues: Serine/threonine-protein kinase-like protein E (614 aa).

The Protein kinase domain occupies 15-404 (YLIQLHLGQN…NPNTNGAPLS (390 aa)). Residue 21-29 (LGQNSLGQQ) coordinates ATP. A compositionally biased stretch (polar residues) spans 256–269 (PEQTDNGVGKSSTG). Residues 256–284 (PEQTDNGVGKSSTGEPPFPTVHQSPESSS) are disordered.

Belongs to the protein kinase superfamily. Ser/Thr protein kinase family.

In terms of biological role, lacks protein kinase activity. The chain is Serine/threonine-protein kinase-like protein E (spkE) from Synechocystis sp. (strain ATCC 27184 / PCC 6803 / Kazusa).